Here is a 152-residue protein sequence, read N- to C-terminus: Cysteine and tyrosine-rich protein 1 (152 aa).

The signal sequence occupies residues 1-27 (MDIPRSLRHPEILLVLLLSEITDICQA). Residues 28-59 (YCEADCKSYCCDGTPPYCCSYYAYIGNVLSGT) are Extracellular-facing. The chain crosses the membrane as a helical span at residues 60-80 (AIAGIVFGIVFIMGVIAGIAI). Topologically, residues 81–152 (CICMCMKSSR…PPPYPGPSRK (72 aa)) are cytoplasmic. The disordered stretch occupies residues 130–152 (PYTPTPPMSHYPSPPPYPGPSRK).

Belongs to the CYYR1 family.

The protein localises to the membrane. The chain is Cysteine and tyrosine-rich protein 1 (cyyr1) from Xenopus laevis (African clawed frog).